The primary structure comprises 242 residues: Uridylate kinase (242 aa).

An ATP-binding site is contributed by 11–14 (KLSG). The segment at 19–24 (GEKGVG) is involved in allosteric activation by GTP. UMP is bound at residue glycine 53. ATP-binding residues include glycine 54 and arginine 58. Residues aspartate 73 and 134–141 (IGSPYFST) contribute to the UMP site. 3 residues coordinate ATP: asparagine 162, tyrosine 168, and aspartate 171.

It belongs to the UMP kinase family. As to quaternary structure, homohexamer.

The protein resides in the cytoplasm. The enzyme catalyses UMP + ATP = UDP + ADP. Its pathway is pyrimidine metabolism; CTP biosynthesis via de novo pathway; UDP from UMP (UMPK route): step 1/1. Allosterically activated by GTP. Inhibited by UTP. Functionally, catalyzes the reversible phosphorylation of UMP to UDP. In Streptococcus pyogenes serotype M1, this protein is Uridylate kinase.